Here is a 76-residue protein sequence, read N- to C-terminus: Large ribosomal subunit protein bL31 (76 aa).

This sequence belongs to the bacterial ribosomal protein bL31 family. Type A subfamily. As to quaternary structure, part of the 50S ribosomal subunit.

In terms of biological role, binds the 23S rRNA. The protein is Large ribosomal subunit protein bL31 of Rhizorhabdus wittichii (strain DSM 6014 / CCUG 31198 / JCM 15750 / NBRC 105917 / EY 4224 / RW1) (Sphingomonas wittichii).